Consider the following 475-residue polypeptide: MTVSVEELKVLLPELAGRVLVAGAGVSGVGITQLLREMGCAVTVADSNSAQLDKLAQQTGCQTISPADVVSDGFQDYTVVVTSPGWRPDSPLLVAAQSAGLEVIGDVELVYRLDRAEVFGPKRTWMVVTGTNGKTTTTAMLAEIMQHSGARAAAVGNIGVSVADAVRTQPRIDVLVAELSSFQLHWSSTLVPDVGILLNLADDHIDWHGSFAQYAQDKAKVLAAPTAIAGFDNGHVMTETTRIQRAEDADPIIGFTLGEPAKGMVGVRDGQLIDCAFGDNVVLRSAEGIEPAGPAGLNDALAAAAAARSMGVSAVCIEEALSKFEVAGHRGQCVGRHREVVAIDNSKATNPHAADSALAGFSSVVWVAGGQLKGAEIDELIVRHAGRIKAVALLGVDRDVIEDSVRTHIPGIPVLSVSETDPRRAMDEAVAWSVSQAEAGDAIVLAPAAASLDMYTGMGQRGDMFATAIAQHLHD.

130 to 136 (GTNGKTT) provides a ligand contact to ATP.

This sequence belongs to the MurCDEF family.

Its subcellular location is the cytoplasm. The catalysed reaction is UDP-N-acetyl-alpha-D-muramoyl-L-alanine + D-glutamate + ATP = UDP-N-acetyl-alpha-D-muramoyl-L-alanyl-D-glutamate + ADP + phosphate + H(+). Its pathway is cell wall biogenesis; peptidoglycan biosynthesis. Functionally, cell wall formation. Catalyzes the addition of glutamate to the nucleotide precursor UDP-N-acetylmuramoyl-L-alanine (UMA). The polypeptide is UDP-N-acetylmuramoylalanine--D-glutamate ligase (Corynebacterium diphtheriae (strain ATCC 700971 / NCTC 13129 / Biotype gravis)).